Consider the following 158-residue polypeptide: UPF0260 protein RL1394 (158 aa).

This sequence belongs to the UPF0260 family.

This chain is UPF0260 protein RL1394, found in Rhizobium johnstonii (strain DSM 114642 / LMG 32736 / 3841) (Rhizobium leguminosarum bv. viciae).